The following is a 291-amino-acid chain: Elongation factor Ts (291 aa).

An involved in Mg(2+) ion dislocation from EF-Tu region spans residues 79–82 (TDFV).

This sequence belongs to the EF-Ts family.

It localises to the cytoplasm. Functionally, associates with the EF-Tu.GDP complex and induces the exchange of GDP to GTP. It remains bound to the aminoacyl-tRNA.EF-Tu.GTP complex up to the GTP hydrolysis stage on the ribosome. The protein is Elongation factor Ts of Roseobacter denitrificans (strain ATCC 33942 / OCh 114) (Erythrobacter sp. (strain OCh 114)).